We begin with the raw amino-acid sequence, 174 residues long: Protein C (174 aa).

The protein belongs to the morbillivirus protein C family.

This is Protein C (P/V/C) from Phocine distemper virus (PDV).